Reading from the N-terminus, the 119-residue chain is Protein TusC (119 aa).

Belongs to the DsrF/TusC family. Heterohexamer, formed by a dimer of trimers. The hexameric TusBCD complex contains 2 copies each of TusB, TusC and TusD. The TusBCD complex interacts with TusE.

The protein resides in the cytoplasm. Its function is as follows. Part of a sulfur-relay system required for 2-thiolation of 5-methylaminomethyl-2-thiouridine (mnm(5)s(2)U) at tRNA wobble positions. This Buchnera aphidicola subsp. Schizaphis graminum (strain Sg) protein is Protein TusC.